Reading from the N-terminus, the 427-residue chain is Enolase (427 aa).

(2R)-2-phosphoglycerate is bound at residue Q162. E204 serves as the catalytic Proton donor. 3 residues coordinate Mg(2+): D241, E284, and D311. (2R)-2-phosphoglycerate contacts are provided by K336, R365, S366, and K387. The Proton acceptor role is filled by K336.

It belongs to the enolase family. Mg(2+) is required as a cofactor.

It localises to the cytoplasm. It is found in the secreted. The protein localises to the cell surface. It catalyses the reaction (2R)-2-phosphoglycerate = phosphoenolpyruvate + H2O. Its pathway is carbohydrate degradation; glycolysis; pyruvate from D-glyceraldehyde 3-phosphate: step 4/5. Catalyzes the reversible conversion of 2-phosphoglycerate (2-PG) into phosphoenolpyruvate (PEP). It is essential for the degradation of carbohydrates via glycolysis. In Natranaerobius thermophilus (strain ATCC BAA-1301 / DSM 18059 / JW/NM-WN-LF), this protein is Enolase.